A 630-amino-acid chain; its full sequence is Sodium-dependent serotonin transporter (630 aa).

The Cytoplasmic portion of the chain corresponds to methionine 1–aspartate 87. Tyrosine 47 is modified (phosphotyrosine). A helical transmembrane segment spans residues phenylalanine 88–asparagine 112. Positions 94, 96, 97, 98, and 101 each coordinate Na(+). Aspartate 98 contributes to the serotonin binding site. At glycine 113–glycine 115 the chain is on the extracellular side. The helical transmembrane segment at alanine 116–methionine 135 threads the bilayer. Topologically, residues glutamate 136–glycine 160 are cytoplasmic. At tyrosine 142 the chain carries Phosphotyrosine. A helical transmembrane segment spans residues isoleucine 161–tyrosine 186. Residues leucine 187 to serine 252 are Extracellular-facing. A disulfide bond links cysteine 200 and cysteine 209. N-linked (GlcNAc...) asparagine glycosylation is found at asparagine 208 and asparagine 217. Residues tryptophan 253–tryptophan 271 form a helical membrane-spanning segment. Residues lysine 272–serine 277 lie on the Cytoplasmic side of the membrane. A Phosphothreonine modification is found at threonine 276. A helical transmembrane segment spans residues glycine 278–valine 297. The Extracellular segment spans residues arginine 298–glycine 324. A helical membrane pass occupies residues valine 325 to phenylalanine 347. A Na(+)-binding site is contributed by serine 336. Topologically, residues alanine 348–aspartate 360 are cytoplasmic. Residues alanine 361–phenylalanine 380 form a helical membrane-spanning segment. Residue asparagine 368 coordinates Na(+). Residues threonine 381–threonine 421 are Extracellular-facing. Residues phenylalanine 422–leucine 443 traverse the membrane as a helical segment. Residues leucine 434, aspartate 437, and serine 438 each coordinate Na(+). Threonine 439 provides a ligand contact to serotonin. Topologically, residues glutamate 444–glutamate 463 are cytoplasmic. A helical transmembrane segment spans residues tryptophan 464–phenylalanine 483. Residues glycine 484–glutamate 494 are Extracellular-facing. The serotonin site is built by glutamate 494 and tyrosine 495. Residues tyrosine 495–tyrosine 516 form a helical membrane-spanning segment. At glycine 517 to arginine 538 the chain is on the cytoplasmic side. The helical transmembrane segment at isoleucine 539–methionine 558 threads the bilayer. Positions 556 and 559 each coordinate serotonin. Topologically, residues serine 559 to serine 574 are extracellular. A helical membrane pass occupies residues valine 575 to tyrosine 595. At arginine 596–valine 630 the chain is on the cytoplasmic side. The interaction with RAB4A stretch occupies residues threonine 616–aspartate 624.

Belongs to the sodium:neurotransmitter symporter (SNF) (TC 2.A.22) family. SLC6A4 subfamily. As to quaternary structure, monomer or homooligomer. Interacts (via C-terminus) with SCAMP2; the interaction is direct and retains transporter molecules intracellularly. Interacts with filamentous actin and STX1A. Interacts (via the N-terminus) with STX1A (via the H3 domain); this interaction regulates SLC4A6 channel conductance. Interacts with SEC23A, SEC24C and PATJ. Interacts with NOS1; the interaction may diminish the cell surface localization of SERT in the brain and, correspondingly, reduce serotonin reuptake. Interacts with TGFB1I1. Interacts with ITGAV:ITGB3. Interacts (via C-terminus) with ITGB3; this interaction regulates SLC6A4 trafficking. Phosphorylation at Thr-276 increases 5-HT uptake and is required for cGMP-mediated SERT regulation. In terms of tissue distribution, expressed in the intestinal crypt epithelial cells (at protein level).

It localises to the cell membrane. The protein localises to the endomembrane system. It is found in the endosome membrane. The protein resides in the synapse. Its subcellular location is the cell junction. It localises to the focal adhesion. The protein localises to the cell projection. It is found in the neuron projection. The catalysed reaction is serotonin(out) + K(+)(in) + Na(+)(out) + H(+)(in) = serotonin(in) + K(+)(out) + Na(+)(in) + H(+)(out). In terms of biological role, serotonin transporter that cotransports serotonin with one Na(+) ion in exchange for one K(+) ion and possibly one proton in an overall electroneutral transport cycle. Transports serotonin across the plasma membrane from the extracellular compartment to the cytosol thus limiting serotonin intercellular signaling. Essential for serotonin homeostasis in the central nervous system. In the developing somatosensory cortex, acts in glutamatergic neurons to control serotonin uptake and its trophic functions accounting for proper spatial organization of cortical neurons and elaboration of sensory circuits. In the mature cortex, acts primarily in brainstem raphe neurons to mediate serotonin uptake from the synaptic cleft back into the pre-synaptic terminal thus terminating serotonin signaling at the synapse. Modulates mucosal serotonin levels in the gastrointestinal tract through uptake and clearance of serotonin in enterocytes. Required for enteric neurogenesis and gastrointestinal reflexes. Regulates blood serotonin levels by ensuring rapid high affinity uptake of serotonin from plasma to platelets, where it is further stored in dense granules via vesicular monoamine transporters and then released upon stimulation. Mechanistically, the transport cycle starts with an outward-open conformation having Na1(+) and Cl(-) sites occupied. The binding of a second extracellular Na2(+) ion and serotonin substrate leads to structural changes to outward-occluded to inward-occluded to inward-open, where the Na2(+) ion and serotonin are released into the cytosol. Binding of intracellular K(+) ion induces conformational transitions to inward-occluded to outward-open and completes the cycle by releasing K(+) possibly together with a proton bound to Asp-98 into the extracellular compartment. Na1(+) and Cl(-) ions remain bound throughout the transport cycle. Additionally, displays serotonin-induced channel-like conductance for monovalent cations, mainly Na(+) ions. The channel activity is uncoupled from the transport cycle and may contribute to the membrane resting potential or excitability. This is Sodium-dependent serotonin transporter (SLC6A4) from Cavia porcellus (Guinea pig).